Consider the following 159-residue polypeptide: SsrA-binding protein (159 aa).

The protein belongs to the SmpB family.

It localises to the cytoplasm. Functionally, required for rescue of stalled ribosomes mediated by trans-translation. Binds to transfer-messenger RNA (tmRNA), required for stable association of tmRNA with ribosomes. tmRNA and SmpB together mimic tRNA shape, replacing the anticodon stem-loop with SmpB. tmRNA is encoded by the ssrA gene; the 2 termini fold to resemble tRNA(Ala) and it encodes a 'tag peptide', a short internal open reading frame. During trans-translation Ala-aminoacylated tmRNA acts like a tRNA, entering the A-site of stalled ribosomes, displacing the stalled mRNA. The ribosome then switches to translate the ORF on the tmRNA; the nascent peptide is terminated with the 'tag peptide' encoded by the tmRNA and targeted for degradation. The ribosome is freed to recommence translation, which seems to be the essential function of trans-translation. The polypeptide is SsrA-binding protein (Acidiphilium cryptum (strain JF-5)).